Here is a 231-residue protein sequence, read N- to C-terminus: Lytic polysaccharide monooxygenase-like protein X325 (231 aa).

The N-terminal stretch at 1 to 17 is a signal peptide; that stretch reads MRLSLLVTLALTALIEA. Histidine 18 is a binding site for Cu(2+). N-linked (GlcNAc...) asparagine glycosylation is found at asparagine 34, asparagine 55, asparagine 98, asparagine 133, asparagine 174, and asparagine 180. Cystine bridges form between cysteine 47–cysteine 157 and cysteine 122–cysteine 178. Isoleucine 202 carries the GPI-anchor amidated isoleucine lipid modification. The propeptide at 203–231 is removed in mature form; the sequence is ASTTTGSAPRYYSWAGWLPLVAGAIWMAL.

The protein belongs to the X325 family. Cu(2+) serves as cofactor.

The protein localises to the cell membrane. Its function is as follows. Lytic polysaccharide monooxygenase-like protein that has diverged to biological functions other than polysaccharide degradation since it does not perform oxidative cleavage of polysaccharides. Acts as a cell surface-bound protein that functions in the copper-accumulation pathway. May also act as the major cell wall sensor that regulates MAP kinase-dependent hyphal anastomosis, the fusion of hyphal cells. The protein is Lytic polysaccharide monooxygenase-like protein X325 of Hypocrea jecorina (strain QM6a) (Trichoderma reesei).